Here is a 606-residue protein sequence, read N- to C-terminus: Diphthine--ammonia ligase (606 aa).

This sequence in the N-terminal section; belongs to the Diphthine--ammonia ligase family. The protein in the C-terminal section; belongs to the RutC family.

Its subcellular location is the cytoplasm. The protein resides in the nucleus. The catalysed reaction is diphthine-[translation elongation factor 2] + NH4(+) + ATP = diphthamide-[translation elongation factor 2] + AMP + diphosphate + H(+). Its pathway is protein modification; peptidyl-diphthamide biosynthesis. Amidase that catalyzes the last step of diphthamide biosynthesis using ammonium and ATP. Diphthamide biosynthesis consists in the conversion of an L-histidine residue in the translation elongation factor eEF-2 (eft201 or eft202) to diphthamide. Has a role in meiosis. The chain is Diphthine--ammonia ligase (mug71) from Schizosaccharomyces pombe (strain 972 / ATCC 24843) (Fission yeast).